Reading from the N-terminus, the 337-residue chain is GTPase Obg (337 aa).

The Obg domain maps to 1 to 158 (MFIDEVRILV…KRLRLELKLL (158 aa)). 2 stretches are compositionally biased toward basic and acidic residues: residues 61–74 (NPEHKAERGRHGEG) and 137–146 (PTEHEPGRPG). Disordered regions lie at residues 61 to 83 (NPEHKAERGRHGEGSQRTGAEGR) and 119 to 146 (GGRGGRGNQHFATPTHQAPTEHEPGRPG). Residues 159-330 (ADVGLVGFPN…LKHAMADRVL (172 aa)) form the OBG-type G domain. GTP is bound by residues 165-172 (GFPNAGKS), 190-194 (FTTLE), 212-215 (DIPG), 282-285 (TKMD), and 311-313 (SSA). The Mg(2+) site is built by S172 and T192.

The protein belongs to the TRAFAC class OBG-HflX-like GTPase superfamily. OBG GTPase family. Monomer. The cofactor is Mg(2+).

The protein localises to the cytoplasm. Functionally, an essential GTPase which binds GTP, GDP and possibly (p)ppGpp with moderate affinity, with high nucleotide exchange rates and a fairly low GTP hydrolysis rate. Plays a role in control of the cell cycle, stress response, ribosome biogenesis and in those bacteria that undergo differentiation, in morphogenesis control. The sequence is that of GTPase Obg from Solibacter usitatus (strain Ellin6076).